A 358-amino-acid chain; its full sequence is NAC domain-containing protein 12 (358 aa).

Residues 16–177 (VPPGFRFHPT…GWVVCRVFRK (162 aa)) enclose the NAC domain. The DNA-binding element occupies 116–183 (IGLRKTLVFY…VFRKKNYQKI (68 aa)).

In terms of tissue distribution, stems and roots, specifically in interfascicular fibers (sclerenchyma), cells differentiating into vascular vessels (cambium), and xylem.

Its subcellular location is the nucleus. In terms of biological role, transcriptional activator of genes involved in biosynthesis of secondary walls. Together with NST1, required for the secondary cell wall thickening and lignification of sclerenchymatous fibers and secondary xylem vessels (tracheary elements). Seems to repress the secondary cell wall thickening of xylary fibers. May also regulate the secondary cell wall lignification of other tissues. Binds to and activates the promoter of MYB46. This is NAC domain-containing protein 12 from Arabidopsis thaliana (Mouse-ear cress).